The following is a 581-amino-acid chain: Fibrous sheath-interacting protein 1 (581 aa).

The segment at 1-77 (MDIIKGNLDG…SNDDKQESCS (77 aa)) is disordered. Positions 14-30 (PASNSRIRPGSRSSNAS) are enriched in polar residues. The segment covering 52-77 (GKEDHSESSNTENRRTSNDDKQESCS) has biased composition (basic and acidic residues). Phosphoserine is present on S87. The stretch at 105–153 (EPKLKELDSQLQDAIQKMKKLDKILAKKQRREKEIKKQGLEMRIKLWEE) forms a coiled coil. 2 disordered regions span residues 338–365 (SSFSPRLENRNNQKPDRDGERNMEVTPG) and 555–581 (HLKLSSPENTIADEQETKDAAEECKEP). Basic and acidic residues-rich tracts occupy residues 344–360 (LENRNNQKPDRDGERNM) and 569–581 (QETKDAAEECKEP).

This sequence belongs to the FSIP1 family.

This chain is Fibrous sheath-interacting protein 1 (FSIP1), found in Homo sapiens (Human).